A 505-amino-acid chain; its full sequence is uncharacterized protein (505 aa).

The active-site Proton acceptor is the His431.

This sequence belongs to the GMC oxidoreductase family. It depends on FAD as a cofactor.

This is an uncharacterized protein from Sinorhizobium fredii (strain NBRC 101917 / NGR234).